Consider the following 411-residue polypeptide: Argininosuccinate synthase (411 aa).

ATP-binding positions include 10–18 and Ala37; that span reads AYSGGLDTS. L-citrulline-binding residues include Tyr89 and Ser94. Residue Gly119 coordinates ATP. Thr121, Asn125, and Asp126 together coordinate L-aspartate. Residue Asn125 participates in L-citrulline binding. L-citrulline contacts are provided by Arg129, Ser178, Ser187, Glu263, and Tyr275.

Belongs to the argininosuccinate synthase family. Type 1 subfamily. As to quaternary structure, homotetramer.

It localises to the cytoplasm. It carries out the reaction L-citrulline + L-aspartate + ATP = 2-(N(omega)-L-arginino)succinate + AMP + diphosphate + H(+). It functions in the pathway amino-acid biosynthesis; L-arginine biosynthesis; L-arginine from L-ornithine and carbamoyl phosphate: step 2/3. The protein is Argininosuccinate synthase of Aeromonas salmonicida (strain A449).